The primary structure comprises 499 residues: UDP-N-acetylmuramoyl-L-alanyl-D-glutamate--2,6-diaminopimelate ligase (499 aa).

L30 and S32 together coordinate UDP-N-acetyl-alpha-D-muramoyl-L-alanyl-D-glutamate. 122 to 128 (GTNGKTT) serves as a coordination point for ATP. UDP-N-acetyl-alpha-D-muramoyl-L-alanyl-D-glutamate is bound by residues 164–165 (TT), S191, Q197, and R199. K231 bears the N6-carboxylysine mark. Meso-2,6-diaminopimelate-binding positions include R397, 421 to 424 (DNPR), G472, and E476. Positions 421–424 (DNPR) match the Meso-diaminopimelate recognition motif motif.

This sequence belongs to the MurCDEF family. MurE subfamily. It depends on Mg(2+) as a cofactor. Post-translationally, carboxylation is probably crucial for Mg(2+) binding and, consequently, for the gamma-phosphate positioning of ATP.

It localises to the cytoplasm. It carries out the reaction UDP-N-acetyl-alpha-D-muramoyl-L-alanyl-D-glutamate + meso-2,6-diaminopimelate + ATP = UDP-N-acetyl-alpha-D-muramoyl-L-alanyl-gamma-D-glutamyl-meso-2,6-diaminopimelate + ADP + phosphate + H(+). It functions in the pathway cell wall biogenesis; peptidoglycan biosynthesis. Catalyzes the addition of meso-diaminopimelic acid to the nucleotide precursor UDP-N-acetylmuramoyl-L-alanyl-D-glutamate (UMAG) in the biosynthesis of bacterial cell-wall peptidoglycan. The protein is UDP-N-acetylmuramoyl-L-alanyl-D-glutamate--2,6-diaminopimelate ligase of Blochmanniella floridana.